The primary structure comprises 213 residues: Nicotinamidase (213 aa).

D10 functions as the Proton acceptor in the catalytic mechanism. Residues D52, H54, and H86 each contribute to the Zn(2+) site. The active site involves K111. Catalysis depends on C156, which acts as the Nucleophile.

The protein belongs to the isochorismatase family.

The enzyme catalyses nicotinamide + H2O = nicotinate + NH4(+). It carries out the reaction pyrazinamide + H2O = pyrazine-2-carboxylate + NH4(+). It participates in cofactor biosynthesis; nicotinate biosynthesis; nicotinate from nicotinamide: step 1/1. Functionally, catalyzes the deamidation of nicotinamide (NAM) into nicotinate. Likely functions in the cyclical salvage pathway for production of NAD from nicotinamide. Is also able to hydrolyze the first-line antituberculous drug pyrazinamide (PZA) into pyrazinoic acid in vitro, but this reaction is not considered to be physiologically relevant. This chain is Nicotinamidase, found in Escherichia coli (strain K12).